The following is a 228-amino-acid chain: Hematopoietically-expressed homeobox protein hhex (228 aa).

The segment at residues 117 to 176 (RKGGQVRFSNDQTIELEKKFETQKYLSPPERKRLAKMLQLSERQVKTWFQNRRAKWRRLK) is a DNA-binding region (homeobox). The disordered stretch occupies residues 175–228 (LKQENPPSTGKREAEDSDTRRLSDAAARARELESGASTDSEELLDIEDEHQFTL). Residues 184–207 (GKREAEDSDTRRLSDAAARARELE) show a composition bias toward basic and acidic residues. Positions 213 to 222 (DSEELLDIED) are enriched in acidic residues.

Expressed in embryonic endothelial and blood lineages. From late-blastula stage, expression is restricted to the dorsal marginal region of the extraembryonic yolk syncytial layer (YSL). By the onset of gastrulation, expressed in the entire dorsal half of the YSL. Post-gastrulation, expression appears in both anterior and posterior lateral plate mesoderm by the 3-somite stage. Posteriorly, expression is in the intermediate cell mass (ICM), which contains both endothelial and blood precursors. Subsequently expressed in the developing endothelial cells including the endocardium until the onset of circulation (24 hpf) and disappears completely by 30 hpf, at which point expression is seen in the thyroid and liver primordia. Also expressed in the developing biliary tree and pancreas.

The protein resides in the nucleus. Recognizes the DNA sequence 5'-ATTAA-3'. Transcriptional repressor. Regulates the differentiation of both endothelial and blood cells. Plays a role in embryonic dorsoventral patterning by regulating bmp expression. May establish anterior identity. Functions in the embryo to regulate liver development. Functions extraembryonically to generate organ chirality. The sequence is that of Hematopoietically-expressed homeobox protein hhex from Danio rerio (Zebrafish).